We begin with the raw amino-acid sequence, 314 residues long: Homoserine O-acetyltransferase (314 aa).

The active-site Acyl-thioester intermediate is cysteine 142. Positions 163 and 192 each coordinate substrate. The active-site Proton acceptor is the histidine 235. Glutamate 237 is a catalytic residue. A substrate-binding site is contributed by arginine 249.

This sequence belongs to the MetA family.

The protein resides in the cytoplasm. The catalysed reaction is L-homoserine + acetyl-CoA = O-acetyl-L-homoserine + CoA. It participates in amino-acid biosynthesis; L-methionine biosynthesis via de novo pathway; O-acetyl-L-homoserine from L-homoserine: step 1/1. Transfers an acetyl group from acetyl-CoA to L-homoserine, forming acetyl-L-homoserine. The protein is Homoserine O-acetyltransferase of Desulfovibrio desulfuricans (strain ATCC 27774 / DSM 6949 / MB).